The sequence spans 547 residues: Carboxypeptidase N subunit 2 (547 aa).

An N-terminal signal peptide occupies residues Met-1–Pro-21. Residues Cys-22–Pro-49 enclose the LRRNT domain. Asn-74, Asn-111, and Asn-119 each carry an N-linked (GlcNAc...) asparagine glycan. LRR repeat units lie at residues Arg-98–Asn-119, Ser-122–His-143, Ile-146–Ser-167, Asp-170–Ser-191, Gly-194–Ser-215, Ser-218–Gln-239, Ser-242–Ser-263, Asn-266–His-287, Gly-290–Asn-311, Arg-314–Asn-335, Gln-338–Asn-359, and Arg-362–Thr-383. N-linked (GlcNAc...) asparagine glycans are attached at residues Asn-266 and Asn-311. 3 N-linked (GlcNAc...) asparagine glycosylation sites follow: Asn-348, Asn-359, and Asn-367. An LRRCT domain is found at Asn-395–Val-447. Residue Asn-520 is glycosylated (N-linked (GlcNAc...) asparagine).

Tetramer of two catalytic chains and two glycosylated inactive chains.

The protein resides in the secreted. Functionally, the 83 kDa subunit binds and stabilizes the catalytic subunit at 37 degrees Celsius and keeps it in circulation. Under some circumstances it may be an allosteric modifier of the catalytic subunit. The sequence is that of Carboxypeptidase N subunit 2 (Cpn2) from Mus musculus (Mouse).